The primary structure comprises 737 residues: MPHDDHKGSRLSLLLFYFLAFLLLWEWLRPLDSFTETKHTGFFSVFIGLTFLLTFFRMRWFVTVPFCVIFTLISIHILFYQGSIFDLSWVSSFLQDVYLNITLIQSGQWNDMIPSFRTLLFFVLLWLLVYLLHYWVIYQRRILFFFLMTVAYITILDTFTPYDATFAVIRIVLIGFFMLGLLYLERIKLMERITLPKTSVLKWFLPLSVLVLAATGFGLAAPKSEPAWPDPVPFLKKITHQDRVSAGESKIGYGNHDESLGGPFQQDATPVFTWQGKERTYFRVETKDTYTGKGWIETDTGMSYQLSNGKVENLWFDHKVATERRTVRVKVDKHYGYNHLMYPIGAETIQPKQAVSLEMNGNTEQISPISEQAGEIRNMGNYTVTYNSPVYKLDELRKVKVRKNSEEYTFSDRYMQLPDSLPERVRTLAIKLTQDHDNMFDKVKAVEDYLGSNAFTYETENVTIPKNDEDYVDQFLFETKMGYCDNFSSAMVVLLRSAGIPARWVKGYTSGEYKEAGNKNGSIYEVTNNNAHSWVEVYFPEQGWVTFEPTKGFTNPAQFTSSDTKDSGSDSSSSPKKAKEKQKEEKKQPQKEEKQKEKREPAVSKKPSASHTNAGAGLYAALAVLAVLLVAAVLLYVFRSLWIPVFAVRKLKRRSDQHAFFEAYGALLKQLKRKGLPKRDSETLRDYAKRIDEKYDIEDMSKLTLSYERALYRNEDSSALWNDSRELWENLIKRRWS.

7 consecutive transmembrane segments (helical) span residues 11 to 31 (LSLLLFYFLAFLLLWEWLRPL), 36 to 56 (ETKHTGFFSVFIGLTFLLTFF), 60 to 80 (WFVTVPFCVIFTLISIHILFY), 118 to 138 (TLLFFVLLWLLVYLLHYWVIY), 142 to 162 (ILFFFLMTVAYITILDTFTPY), 164 to 184 (ATFAVIRIVLIGFFMLGLLYL), and 200 to 220 (VLKWFLPLSVLVLAATGFGLA). The tract at residues 556–611 (PAQFTSSDTKDSGSDSSSSPKKAKEKQKEEKKQPQKEEKQKEKREPAVSKKPSASH) is disordered. Residues 581–603 (KQKEEKKQPQKEEKQKEKREPAV) show a composition bias toward basic and acidic residues. Residues 618 to 638 (LYAALAVLAVLLVAAVLLYVF) form a helical membrane-spanning segment.

The protein localises to the cell membrane. This is an uncharacterized protein from Bacillus subtilis (strain 168).